The sequence spans 94 residues: Integration host factor subunit beta (94 aa).

Belongs to the bacterial histone-like protein family. In terms of assembly, heterodimer of an alpha and a beta chain.

Functionally, this protein is one of the two subunits of integration host factor, a specific DNA-binding protein that functions in genetic recombination as well as in transcriptional and translational control. The chain is Integration host factor subunit beta from Ruegeria pomeroyi (strain ATCC 700808 / DSM 15171 / DSS-3) (Silicibacter pomeroyi).